A 120-amino-acid chain; its full sequence is Ribonuclease P protein component (120 aa).

The protein belongs to the RnpA family. Consists of a catalytic RNA component (M1 or rnpB) and a protein subunit.

The enzyme catalyses Endonucleolytic cleavage of RNA, removing 5'-extranucleotides from tRNA precursor.. Functionally, RNaseP catalyzes the removal of the 5'-leader sequence from pre-tRNA to produce the mature 5'-terminus. It can also cleave other RNA substrates such as 4.5S RNA. The protein component plays an auxiliary but essential role in vivo by binding to the 5'-leader sequence and broadening the substrate specificity of the ribozyme. The sequence is that of Ribonuclease P protein component from Mycobacterium leprae (strain Br4923).